The following is a 153-amino-acid chain: MEKLDRLSEAFKMLLKQEKCSSQSEIVTALQALGFKNINQSKVSRMLSKFGAIRTRNTKMEMVYQLPTELSIPTTSSPLKNLVLDIDYNEVLIVVKTSPGAAQLIARLLDSMGKSEGILGTIAGDDAIFITPTHSTPMETLIKNITTLFESSF.

The protein belongs to the ArgR family.

It is found in the cytoplasm. Its pathway is amino-acid biosynthesis; L-arginine biosynthesis [regulation]. Regulates arginine biosynthesis genes. This chain is Arginine repressor, found in Haemophilus ducreyi (strain 35000HP / ATCC 700724).